The primary structure comprises 213 residues: MSDAQSARDNYQGVWGQRIGFGRKPALLMIDFMQGYTTPGAPLYAPGVVAAVEQAAGLLALARDCGTLVVHTNIRYQPPHFADGGVWVRKAPVMKDMVEGNPLAAFCEAVAPQAGEVVLSKQYASAFFATSLAPLLHAQGVDTVVLAGCSTSGCIRASAVDAMQHGFRTIVVRECVGDRHSDPHEANLFDIDSKYGDVVTRQDAMQQLRHLAG.

Cysteine 154 (nucleophile) is an active-site residue.

The protein belongs to the isochorismatase family.

The enzyme catalyses maleamate + H2O = maleate + NH4(+). The protein operates within cofactor degradation; nicotinate degradation. Maleamate amidase that transforms maleamate into maleate and ammonia in the aerobic nicotinate degradation pathway. The protein is Maleamate amidohydrolase (nicF) of Pseudomonas putida (strain ATCC 47054 / DSM 6125 / CFBP 8728 / NCIMB 11950 / KT2440).